Consider the following 462-residue polypeptide: Succinate semialdehyde dehydrogenase [NAD(P)+] Sad (462 aa).

NADP(+) is bound by residues 136 to 137 (WN), 160 to 163 (KHAP), and 212 to 213 (GS). Residue Glu-234 is the Proton acceptor of the active site. NADP(+) is bound at residue Leu-235. Cys-268 functions as the Nucleophile in the catalytic mechanism. Glu-365 is an NADP(+) binding site.

It belongs to the aldehyde dehydrogenase family. In terms of assembly, homodimer.

The catalysed reaction is succinate semialdehyde + NAD(+) + H2O = succinate + NADH + 2 H(+). It catalyses the reaction succinate semialdehyde + NADP(+) + H2O = succinate + NADPH + 2 H(+). It functions in the pathway amino-acid degradation; 4-aminobutanoate degradation. Its function is as follows. Catalyzes the NAD(+)-dependent oxidation of succinate semialdehyde to succinate. It acts preferentially with NAD as cosubstrate but can also use NADP. Prevents the toxic accumulation of succinate semialdehyde (SSA) and plays an important role when arginine and putrescine are used as the sole nitrogen or carbon sources. The protein is Succinate semialdehyde dehydrogenase [NAD(P)+] Sad (sad) of Escherichia coli (strain K12).